The chain runs to 213 residues: NADH-quinone oxidoreductase subunit B (213 aa).

Cys38, Cys39, Cys104, and Cys133 together coordinate [4Fe-4S] cluster. The segment at 172–213 (IMPENTNRFPGQLEKPKTSTLTLEAPDADDAEEASTPEPVAA) is disordered. Residues 197–206 (PDADDAEEAS) show a composition bias toward acidic residues.

Belongs to the complex I 20 kDa subunit family. In terms of assembly, NDH-1 is composed of 14 different subunits. Subunits NuoB, C, D, E, F, and G constitute the peripheral sector of the complex. [4Fe-4S] cluster serves as cofactor.

Its subcellular location is the cell inner membrane. It carries out the reaction a quinone + NADH + 5 H(+)(in) = a quinol + NAD(+) + 4 H(+)(out). NDH-1 shuttles electrons from NADH, via FMN and iron-sulfur (Fe-S) centers, to quinones in the respiratory chain. The immediate electron acceptor for the enzyme in this species is believed to be a menaquinone. Couples the redox reaction to proton translocation (for every two electrons transferred, four hydrogen ions are translocated across the cytoplasmic membrane), and thus conserves the redox energy in a proton gradient. The polypeptide is NADH-quinone oxidoreductase subunit B (nuoB) (Salinibacter ruber (strain DSM 13855 / M31)).